A 114-amino-acid polypeptide reads, in one-letter code: Histone H3-3 (114 aa).

Basic residues predominate over residues 1 to 17 (NTGGKAPRKHIAHKQAK). Residues 1–32 (NTGGKAPRKHIAHKQAKKSSAAAATGGVKKPH) form a disordered region. Residues 18–28 (KSSAAAATGGV) are compositionally biased toward low complexity.

It belongs to the histone H3 family. The nucleosome is a histone octamer containing two molecules each of H2A, H2B, H3 and H4 assembled in one H3-H4 heterotetramer and two H2A-H2B heterodimers. The octamer wraps approximately 147 bp of DNA.

Its subcellular location is the nucleus. The protein localises to the chromosome. In terms of biological role, core component of nucleosome. Nucleosomes wrap and compact DNA into chromatin, limiting DNA accessibility to the cellular machineries which require DNA as a template. Histones thereby play a central role in transcription regulation, DNA repair, DNA replication and chromosomal stability. DNA accessibility is regulated via a complex set of post-translational modifications of histones, also called histone code, and nucleosome remodeling. The sequence is that of Histone H3-3 (H3-3) from Stylonychia lemnae (Ciliate).